Here is a 47-residue protein sequence, read N- to C-terminus: Large ribosomal subunit protein bL33C (47 aa).

This sequence belongs to the bacterial ribosomal protein bL33 family.

The sequence is that of Large ribosomal subunit protein bL33C from Staphylococcus aureus (strain MRSA252).